Consider the following 339-residue polypeptide: Lipoate-protein ligase A (339 aa).

The BPL/LPL catalytic domain occupies 29–217; it reads PKKQSILFLW…AFFQHYGMKV (189 aa). ATP is bound by residues Arg71, 76-79, and Lys135; that span reads GAVF. Position 135 (Lys135) interacts with (R)-lipoate.

Belongs to the LplA family. As to quaternary structure, monomer.

Its subcellular location is the cytoplasm. The enzyme catalyses L-lysyl-[lipoyl-carrier protein] + (R)-lipoate + ATP = N(6)-[(R)-lipoyl]-L-lysyl-[lipoyl-carrier protein] + AMP + diphosphate + H(+). It participates in protein modification; protein lipoylation via exogenous pathway; protein N(6)-(lipoyl)lysine from lipoate: step 1/2. Its pathway is protein modification; protein lipoylation via exogenous pathway; protein N(6)-(lipoyl)lysine from lipoate: step 2/2. Functionally, catalyzes both the ATP-dependent activation of exogenously supplied lipoate to lipoyl-AMP and the transfer of the activated lipoyl onto the lipoyl domains of lipoate-dependent enzymes. This Blochmanniella pennsylvanica (strain BPEN) protein is Lipoate-protein ligase A.